We begin with the raw amino-acid sequence, 217 residues long: UPF0323 lipoprotein HPSH_01205 (217 aa).

A signal peptide spans 1 to 27; that stretch reads MKKPYRKISDYAIVGGLSALVMVSIVG. A lipid anchor (N-palmitoyl cysteine) is attached at Cys28. The S-diacylglycerol cysteine moiety is linked to residue Cys28. A compositionally biased stretch (polar residues) spans 160–171; sequence QRTYKSPQAYQR. Positions 160–217 are disordered; the sequence is QRTYKSPQAYQRSQNSFSKSAPSASSMGGASKGQSGFFGSSRPTSSPAVSSGTRGFNS. The segment covering 172 to 210 has biased composition (low complexity); it reads SQNSFSKSAPSASSMGGASKGQSGFFGSSRPTSSPAVSS.

The protein belongs to the UPF0323 family.

Its subcellular location is the cell membrane. The chain is UPF0323 lipoprotein HPSH_01205 from Helicobacter pylori (strain Shi470).